We begin with the raw amino-acid sequence, 349 residues long: GTP 3',8-cyclase (349 aa).

A Radical SAM core domain is found at 26–245; sequence GFGRAVTYLR…SSFWTLTDIP (220 aa). Arg-35 contributes to the GTP binding site. [4Fe-4S] cluster is bound by residues Cys-42 and Cys-46. Tyr-48 lines the S-adenosyl-L-methionine pocket. Cys-49 lines the [4Fe-4S] cluster pocket. Arg-84 provides a ligand contact to GTP. Gly-88 contributes to the S-adenosyl-L-methionine binding site. Thr-118 is a GTP binding site. Ser-142 lines the S-adenosyl-L-methionine pocket. Residue Lys-178 participates in GTP binding. Met-212 serves as a coordination point for S-adenosyl-L-methionine. Residues Cys-275 and Cys-278 each coordinate [4Fe-4S] cluster. 280 to 282 lines the GTP pocket; it reads RVR. A [4Fe-4S] cluster-binding site is contributed by Cys-292.

This sequence belongs to the radical SAM superfamily. MoaA family. Monomer and homodimer. [4Fe-4S] cluster serves as cofactor.

The catalysed reaction is GTP + AH2 + S-adenosyl-L-methionine = (8S)-3',8-cyclo-7,8-dihydroguanosine 5'-triphosphate + 5'-deoxyadenosine + L-methionine + A + H(+). The protein operates within cofactor biosynthesis; molybdopterin biosynthesis. In terms of biological role, catalyzes the cyclization of GTP to (8S)-3',8-cyclo-7,8-dihydroguanosine 5'-triphosphate. The polypeptide is GTP 3',8-cyclase (Caulobacter vibrioides (strain ATCC 19089 / CIP 103742 / CB 15) (Caulobacter crescentus)).